We begin with the raw amino-acid sequence, 291 residues long: Phosphoribosylaminoimidazole-succinocarboxamide synthase (291 aa).

The protein belongs to the SAICAR synthetase family.

It catalyses the reaction 5-amino-1-(5-phospho-D-ribosyl)imidazole-4-carboxylate + L-aspartate + ATP = (2S)-2-[5-amino-1-(5-phospho-beta-D-ribosyl)imidazole-4-carboxamido]succinate + ADP + phosphate + 2 H(+). It functions in the pathway purine metabolism; IMP biosynthesis via de novo pathway; 5-amino-1-(5-phospho-D-ribosyl)imidazole-4-carboxamide from 5-amino-1-(5-phospho-D-ribosyl)imidazole-4-carboxylate: step 1/2. In Candida maltosa (Yeast), this protein is Phosphoribosylaminoimidazole-succinocarboxamide synthase (ADE1).